The primary structure comprises 122 residues: MPPLAPQLCRAVFLVPILLLLQVKPLNGSPGPKDGSQTEKTPSADQNQEQFEEHFVASSVGEMWQVVDMAQQEEDQSSKTAAVHKHSFHLSFCFSLASVMVFSGGPLRRTFPNIQLCFMLTH.

Positions 1-28 (MPPLAPQLCRAVFLVPILLLLQVKPLNG) are cleaved as a signal peptide. Residues 27–51 (NGSPGPKDGSQTEKTPSADQNQEQF) are disordered. A compositionally biased stretch (polar residues) spans 38-49 (TEKTPSADQNQE).

The protein localises to the secreted. Functionally, sperm protein required for fusion of sperm with the egg membrane during fertilization. The protein is Sperm-egg fusion protein LLCFC1 of Homo sapiens (Human).